Here is a 335-residue protein sequence, read N- to C-terminus: Adenine deaminase (335 aa).

Zn(2+)-binding residues include H17, H19, and H197. Residue E200 is the Proton donor of the active site. D278 contributes to the Zn(2+) binding site. Position 279 (D279) interacts with substrate.

This sequence belongs to the metallo-dependent hydrolases superfamily. Adenosine and AMP deaminases family. Adenine deaminase type 2 subfamily. It depends on Zn(2+) as a cofactor.

It carries out the reaction adenine + H2O + H(+) = hypoxanthine + NH4(+). Functionally, catalyzes the hydrolytic deamination of adenine to hypoxanthine. Plays an important role in the purine salvage pathway and in nitrogen catabolism. This chain is Adenine deaminase, found in Marinomonas sp. (strain MWYL1).